The following is a 660-amino-acid chain: Probable alpha-galactosidase D (660 aa).

The first 20 residues, Met1–Leu20, serve as a signal peptide directing secretion. N-linked (GlcNAc...) asparagine glycans are attached at residues Asn47, Asn91, and Asn129. A disulfide bond links Cys124 and Cys157. The active-site Nucleophile is Asp155. N-linked (GlcNAc...) asparagine glycosylation is found at Asn182 and Asn191. Position 200-204 (Glu200–Ser204) interacts with substrate. Asp222 functions as the Proton donor in the catalytic mechanism. Residues Asn351, Asn403, Asn460, Asn492, Asn506, Asn514, and Asn584 are each glycosylated (N-linked (GlcNAc...) asparagine).

This sequence belongs to the glycosyl hydrolase 27 family.

It is found in the secreted. It catalyses the reaction Hydrolysis of terminal, non-reducing alpha-D-galactose residues in alpha-D-galactosides, including galactose oligosaccharides, galactomannans and galactolipids.. In terms of biological role, hydrolyzes a variety of simple alpha-D-galactoside as well as more complex molecules such as oligosaccharides and polysaccharides. The chain is Probable alpha-galactosidase D (aglD) from Aspergillus niger (strain ATCC MYA-4892 / CBS 513.88 / FGSC A1513).